Consider the following 102-residue polypeptide: Small ribosomal subunit protein uS10 (102 aa).

It belongs to the universal ribosomal protein uS10 family. Part of the 30S ribosomal subunit.

Involved in the binding of tRNA to the ribosomes. The chain is Small ribosomal subunit protein uS10 from Streptococcus mutans serotype c (strain ATCC 700610 / UA159).